We begin with the raw amino-acid sequence, 239 residues long: Purine nucleoside phosphorylase DeoD-type (239 aa).

His-5 lines the a purine D-ribonucleoside pocket. Residues Gly-21 and Arg-25 each coordinate phosphate. Lys-27 bears the N6-acetyllysine mark. Residues Arg-44 and 88 to 91 (RVGS) contribute to the phosphate site. A purine D-ribonucleoside is bound by residues 180 to 182 (EME) and 204 to 205 (SD). Asp-205 acts as the Proton donor in catalysis.

This sequence belongs to the PNP/UDP phosphorylase family. As to quaternary structure, homohexamer; trimer of homodimers.

The enzyme catalyses a purine D-ribonucleoside + phosphate = a purine nucleobase + alpha-D-ribose 1-phosphate. It catalyses the reaction a purine 2'-deoxy-D-ribonucleoside + phosphate = a purine nucleobase + 2-deoxy-alpha-D-ribose 1-phosphate. Functionally, catalyzes the reversible phosphorolytic breakdown of the N-glycosidic bond in the beta-(deoxy)ribonucleoside molecules, with the formation of the corresponding free purine bases and pentose-1-phosphate. The sequence is that of Purine nucleoside phosphorylase DeoD-type from Escherichia coli O81 (strain ED1a).